We begin with the raw amino-acid sequence, 96 residues long: MALTLADVDKIARLSRLQLTAEEKEKSLQELNDIFTMVEQMQNINTDGIEPMAHPHEVALRLREDEVTETDRAAEYQAVAPEVRNRLYIVPQVIEE.

It belongs to the GatC family. As to quaternary structure, heterotrimer of A, B and C subunits.

It carries out the reaction L-glutamyl-tRNA(Gln) + L-glutamine + ATP + H2O = L-glutaminyl-tRNA(Gln) + L-glutamate + ADP + phosphate + H(+). The enzyme catalyses L-aspartyl-tRNA(Asn) + L-glutamine + ATP + H2O = L-asparaginyl-tRNA(Asn) + L-glutamate + ADP + phosphate + 2 H(+). Allows the formation of correctly charged Asn-tRNA(Asn) or Gln-tRNA(Gln) through the transamidation of misacylated Asp-tRNA(Asn) or Glu-tRNA(Gln) in organisms which lack either or both of asparaginyl-tRNA or glutaminyl-tRNA synthetases. The reaction takes place in the presence of glutamine and ATP through an activated phospho-Asp-tRNA(Asn) or phospho-Glu-tRNA(Gln). The polypeptide is Aspartyl/glutamyl-tRNA(Asn/Gln) amidotransferase subunit C (Neisseria gonorrhoeae (strain ATCC 700825 / FA 1090)).